The following is a 197-amino-acid chain: Large ribosomal subunit protein bL17 (197 aa).

The segment at Asp120 to Thr197 is disordered. A compositionally biased stretch (gly residues) spans Gly127–Arg136. The span at Ser159–Thr197 shows a compositional bias: acidic residues.

This sequence belongs to the bacterial ribosomal protein bL17 family. In terms of assembly, part of the 50S ribosomal subunit. Contacts protein L32.

This Salinibacter ruber (strain DSM 13855 / M31) protein is Large ribosomal subunit protein bL17.